Consider the following 374-residue polypeptide: Alginate lyase (374 aa).

An N-terminal signal peptide occupies residues 1–26; the sequence is MRNPKLKNLLAPTLLSLAMFAGATQA. Residues 67 to 68, 140 to 141, and Y258 each bind substrate; these read SK and HT.

This sequence belongs to the polysaccharide lyase 5 family.

It is found in the periplasm. It carries out the reaction Eliminative cleavage of alginate to give oligosaccharides with 4-deoxy-alpha-L-erythro-hex-4-enuronosyl groups at their non-reducing ends and beta-D-mannuronate at their reducing end.. In terms of biological role, catalyzes the depolymerization of alginate by cleaving the beta-1,4 glycosidic bond between two adjacent sugar residues via a beta-elimination mechanism. May serve to degrade mislocalized alginate that is trapped in the periplasmic space. The polypeptide is Alginate lyase (Cobetia marina (Deleya marina)).